The following is a 365-amino-acid chain: Aminomethyltransferase (365 aa).

The protein belongs to the GcvT family. As to quaternary structure, the glycine cleavage system is composed of four proteins: P, T, L and H.

The catalysed reaction is N(6)-[(R)-S(8)-aminomethyldihydrolipoyl]-L-lysyl-[protein] + (6S)-5,6,7,8-tetrahydrofolate = N(6)-[(R)-dihydrolipoyl]-L-lysyl-[protein] + (6R)-5,10-methylene-5,6,7,8-tetrahydrofolate + NH4(+). In terms of biological role, the glycine cleavage system catalyzes the degradation of glycine. This Chlorobaculum parvum (strain DSM 263 / NCIMB 8327) (Chlorobium vibrioforme subsp. thiosulfatophilum) protein is Aminomethyltransferase.